The chain runs to 280 residues: uncharacterized protein (280 aa).

Disordered regions lie at residues 1–124 (MPRD…QREA) and 177–280 (LEEE…LSSK). Composition is skewed to basic residues over residues 16 to 36 (SRRRKHSRSPVRQRHSRRSRR) and 48 to 83 (YSRRKSRSISPRRHRSRSVTPKRRSPTPKRYKRQKS). 2 stretches are compositionally biased toward basic and acidic residues: residues 102-124 (AKNRNGEKLKREEEERKRRQREA) and 182-259 (EASL…ERLK).

This is an uncharacterized protein from Arabidopsis thaliana (Mouse-ear cress).